The sequence spans 204 residues: uncharacterized protein (204 aa).

Residues 1–20 (MQNPLPEVMSPEHDKRTTTP) are disordered.

This is an uncharacterized protein from Frog virus 3 (isolate Goorha) (FV-3).